The following is a 359-amino-acid chain: Mannose-1-phosphate guanylyltransferase catalytic subunit beta (359 aa).

The interval 2-221 is substrate-binding domain; it reads KALILVGGFG…EGFWMDVGQP (220 aa). Asp-109 is a binding site for GDP-alpha-D-mannose. Residue Asp-109 coordinates Mg(2+). Lys-161 is an active-site residue. Asp-217 serves as a coordination point for GDP-alpha-D-mannose. Asp-217 contributes to the Mg(2+) binding site. Positions 244–359 are hexapeptide repeat domain; the sequence is ATGNGIIGPV…SSIPEPEIIM (116 aa).

Belongs to the transferase hexapeptide repeat family. As to quaternary structure, component of the GMPPA-GMPPB mannose-1-phosphate guanylyltransferase complex composed of 4 GMPPA subunits and 8 gmppB subunits; the complex is organized into three layers, a central layer made up of 2 gmppA dimers sandwiched between two layers each made up of 2 gmppB dimers. gmppB catalytic activity is reduced when part of the complex and binding of GDP-alpha-D-Mannose by gmppA induces allosteric feedback inhibition of gmppB. Mg(2+) serves as cofactor.

It carries out the reaction alpha-D-mannose 1-phosphate + GTP + H(+) = GDP-alpha-D-mannose + diphosphate. It functions in the pathway nucleotide-sugar biosynthesis; GDP-alpha-D-mannose biosynthesis; GDP-alpha-D-mannose from alpha-D-mannose 1-phosphate (GTP route): step 1/1. With respect to regulation, enzyme activity is reduced by incorporation into the GMPPA-GMPPB mannose-1-phosphate guanylyltransferase complex. Allosterically inhibited, when part of the GMPPA-GMPPB complex, by GDP-alpha-D-mannose binding to GMPPA. Its function is as follows. Catalytic subunit of the GMPPA-GMPPB mannose-1-phosphate guanylyltransferase complex. Catalyzes the formation of GDP-mannose, an essential precursor of glycan moieties of glycoproteins and glycolipids. Can catalyze the reverse reaction in vitro. Together with GMPPA regulates GDP-alpha-D-mannose levels. The sequence is that of Mannose-1-phosphate guanylyltransferase catalytic subunit beta (gmppB) from Dictyostelium discoideum (Social amoeba).